The following is a 701-amino-acid chain: Polyribonucleotide nucleotidyltransferase (701 aa).

Positions 485 and 491 each coordinate Mg(2+). Residues 552–611 form the KH domain; sequence PKIFKTTVDPEKIRDIIGPGGKMINKIIAETNVKIDIEPDGRIFVAAPDDISGNRAISMI. Residues 621–689 enclose the S1 motif domain; that stretch reads GQFFLGKVTR…KLGRLSLSRK (69 aa).

Belongs to the polyribonucleotide nucleotidyltransferase family. Mg(2+) is required as a cofactor.

It is found in the cytoplasm. It catalyses the reaction RNA(n+1) + phosphate = RNA(n) + a ribonucleoside 5'-diphosphate. Its function is as follows. Involved in mRNA degradation. Catalyzes the phosphorolysis of single-stranded polyribonucleotides processively in the 3'- to 5'-direction. This Caldicellulosiruptor bescii (strain ATCC BAA-1888 / DSM 6725 / KCTC 15123 / Z-1320) (Anaerocellum thermophilum) protein is Polyribonucleotide nucleotidyltransferase.